A 177-amino-acid chain; its full sequence is Large ribosomal subunit protein uL6 (177 aa).

It belongs to the universal ribosomal protein uL6 family. Part of the 50S ribosomal subunit.

Its function is as follows. This protein binds to the 23S rRNA, and is important in its secondary structure. It is located near the subunit interface in the base of the L7/L12 stalk, and near the tRNA binding site of the peptidyltransferase center. This is Large ribosomal subunit protein uL6 from Methylorubrum populi (strain ATCC BAA-705 / NCIMB 13946 / BJ001) (Methylobacterium populi).